We begin with the raw amino-acid sequence, 313 residues long: MMYDLFMFVLNFLLLIICVLISVAFLTLMERKVLGYIHIRKGPNKVGFLGIPQPFSDAIKLFCKEQPIPFMSNYFLYYFSPVFNLMLSLLIWVIFPYLTYMCSFPYGFYFLCCTSLSVYTFMIAGWSSNSNYALLGSLRSVAQTISYEVSLALILLSLIILIGSFNMLYFMNFQLYCWFIVFSFPLALSFFGSSLAETNRTPFDFAEGESELVSGFNIEYSTGGFTLIFLAEYSSIIFMSMLFSLIFLGGDFYSFYFFFKLSLVSFFFVWVRGTLPRFRYDKLMYLAWKSYLPLSLNFLFFFIGLSVMFFSII.

The next 8 helical transmembrane spans lie at 5–25, 75–95, 104–124, 151–171, 175–195, 227–247, 251–271, and 293–313; these read LFMFVLNFLLLIICVLISVAF, FLYYFSPVFNLMLSLLIWVIF, FPYGFYFLCCTSLSVYTFMIA, LALILLSLIILIGSFNMLYFM, LYCWFIVFSFPLALSFFGSSL, LIFLAEYSSIIFMSMLFSLIF, DFYSFYFFFKLSLVSFFFVWV, and PLSLNFLFFFIGLSVMFFSII.

Belongs to the complex I subunit 1 family.

It is found in the mitochondrion inner membrane. The enzyme catalyses a ubiquinone + NADH + 5 H(+)(in) = a ubiquinol + NAD(+) + 4 H(+)(out). Its function is as follows. Core subunit of the mitochondrial membrane respiratory chain NADH dehydrogenase (Complex I) that is believed to belong to the minimal assembly required for catalysis. Complex I functions in the transfer of electrons from NADH to the respiratory chain. The immediate electron acceptor for the enzyme is believed to be ubiquinone. This chain is NADH-ubiquinone oxidoreductase chain 1 (ND1), found in Locusta migratoria (Migratory locust).